The chain runs to 553 residues: MGWLTKILKGSSHKFSDGQCNGRYREDRNLEGPRYSAEGSDFDKEEIECAIALSLSEQEHVIPQDDKGKKIIEYKSETEEDDDDDEDEDEEYMRAQLEAAEEEERRVAQAQIEEEEKRRAEAQLEETEKLLAKARLEEEEMRRSKAQLEEDELLAKALQESMNVGSPPRYDPGNILQPYPFLIPSSHRICVGCQAEIGHGRFLSCMGGVWHPECFCCNACDKPIIDYEFSMSGNRPYHKLCYKEQHHPKCDVCHNFIPTNPAGLIEYRAHPFWMQKYCPSHERDGTPRCCSCERMEPKDTKYLILDDGRKLCLECLDSAIMDTHECQPLYLEIREFYEGLHMKVEQQIPMLLVERSALNEAMEGEKHGHHHLPETRGLCLSEEQTVTTVLRRPRIGAGYKLIDMITEPCRLIRRCEVTAILILYGLPRLLTGSILAHEMMHAWLRLNGYPNLRPEVEEGICQVLAHMWLESETYAGSTLVDIASSSSSAVVSASSKKGERSDFEKKLGEFFKHQIESDSSSAYGDGFRQGNQAVLKHGLRRTLDHIRLTGTFP.

A disordered region spans residues 10–41 (GSSHKFSDGQCNGRYREDRNLEGPRYSAEGSD). The 20-residue stretch at 42–61 (FDKEEIECAIALSLSEQEHV) folds into the UIM 1 domain. A compositionally biased stretch (basic and acidic residues) spans 62–77 (IPQDDKGKKIIEYKSE). The tract at residues 62 to 91 (IPQDDKGKKIIEYKSETEEDDDDDEDEDEE) is disordered. Acidic residues predominate over residues 78 to 91 (TEEDDDDDEDEDEE). In terms of domain architecture, UIM 2 spans 87–106 (DEDEEYMRAQLEAAEEEERR). The UIM 3; degenerate domain maps to 122-141 (AQLEETEKLLAKARLEEEEM). The UIM 4 domain maps to 149-168 (EEDELLAKALQESMNVGSPP). S166 is subject to Phosphoserine. The LIM zinc-binding domain maps to 188 to 248 (RICVGCQAEI…KLCYKEQHHP (61 aa)).

Interacts with ubiquitin, TCP14 and TCP15. In terms of processing, polyubiquitinated by DA2.

Its function is as follows. Acts redundantly with DA1 and DAR2 to regulate endoreduplication during leaf development. Together with DA1 and DAR2, modulates the protein stability of the transcription factors TCP14 and TCP15, which repress endoreduplication by directly regulating the expression of cell-cycle genes. This chain is Protein DA1-related 1, found in Arabidopsis thaliana (Mouse-ear cress).